The chain runs to 359 residues: Alanine racemase (359 aa).

K34 serves as the catalytic Proton acceptor; specific for D-alanine. An N6-(pyridoxal phosphate)lysine modification is found at K34. R129 provides a ligand contact to substrate. Y255 acts as the Proton acceptor; specific for L-alanine in catalysis. Residue M303 coordinates substrate.

This sequence belongs to the alanine racemase family. Pyridoxal 5'-phosphate serves as cofactor.

The enzyme catalyses L-alanine = D-alanine. Its pathway is amino-acid biosynthesis; D-alanine biosynthesis; D-alanine from L-alanine: step 1/1. Catalyzes the interconversion of L-alanine and D-alanine. May also act on other amino acids. The polypeptide is Alanine racemase (alr) (Shigella dysenteriae serotype 1 (strain Sd197)).